We begin with the raw amino-acid sequence, 180 residues long: MSQFLSLRNCLRLTIRLLRQFRRGEGMKAVIIMGSKSDLDYSKKIASKLADFGIDAVMRIASAHKTPEKVLEIIKEYEKEDVVFVTVAGRSNALSGFVDANTSKPVIASPPYSDKFGGADIFSSIRMPSGVAPMLVLEAENAALAVAKIFALKDEGVREKVVQFQENKRREIYKADEELR.

The substrate site is built by S35, D38, S62, K65, G89, and S91.

It belongs to the AIR carboxylase family. Class II subfamily.

The enzyme catalyses 5-amino-1-(5-phospho-D-ribosyl)imidazole-4-carboxylate + H(+) = 5-amino-1-(5-phospho-beta-D-ribosyl)imidazole + CO2. It participates in purine metabolism; IMP biosynthesis via de novo pathway; 5-amino-1-(5-phospho-D-ribosyl)imidazole-4-carboxylate from 5-amino-1-(5-phospho-D-ribosyl)imidazole (carboxylase route): step 1/1. In terms of biological role, catalyzes the reversible conversion of 5-aminoimidazole ribonucleotide (AIR) and CO(2) to 4-carboxy-5-aminoimidazole ribonucleotide (CAIR). The sequence is that of Phosphoribosylaminoimidazole carboxylase from Archaeoglobus fulgidus (strain ATCC 49558 / DSM 4304 / JCM 9628 / NBRC 100126 / VC-16).